The primary structure comprises 424 residues: CinA-like protein (424 aa).

This sequence belongs to the CinA family.

This Shewanella woodyi (strain ATCC 51908 / MS32) protein is CinA-like protein.